The primary structure comprises 244 residues: 5-oxoprolinase subunit A (244 aa).

It belongs to the LamB/PxpA family. In terms of assembly, forms a complex composed of PxpA, PxpB and PxpC.

The enzyme catalyses 5-oxo-L-proline + ATP + 2 H2O = L-glutamate + ADP + phosphate + H(+). Its function is as follows. Catalyzes the cleavage of 5-oxoproline to form L-glutamate coupled to the hydrolysis of ATP to ADP and inorganic phosphate. The sequence is that of 5-oxoprolinase subunit A from Shigella dysenteriae serotype 1 (strain Sd197).